The following is a 336-amino-acid chain: Phospho-N-acetylmuramoyl-pentapeptide-transferase (336 aa).

Helical transmembrane passes span 1–21, 56–76, 78–98, 124–144, 148–168, 184–204, 210–230, 239–259, 264–284, and 314–334; these read MLPL…SLFL, IPTA…LLLF, IQLW…ALGW, CLAA…FLSF, FLGI…FAIA, GLDG…LVVA, PWAF…LGFL, VFMG…CAVL, FLLL…IVQV, and VVRN…IAVF.

This sequence belongs to the glycosyltransferase 4 family. MraY subfamily. The cofactor is Mg(2+).

It localises to the cell inner membrane. It carries out the reaction UDP-N-acetyl-alpha-D-muramoyl-L-alanyl-gamma-D-glutamyl-meso-2,6-diaminopimeloyl-D-alanyl-D-alanine + di-trans,octa-cis-undecaprenyl phosphate = di-trans,octa-cis-undecaprenyl diphospho-N-acetyl-alpha-D-muramoyl-L-alanyl-D-glutamyl-meso-2,6-diaminopimeloyl-D-alanyl-D-alanine + UMP. Its pathway is cell wall biogenesis; peptidoglycan biosynthesis. Its function is as follows. Catalyzes the initial step of the lipid cycle reactions in the biosynthesis of the cell wall peptidoglycan: transfers peptidoglycan precursor phospho-MurNAc-pentapeptide from UDP-MurNAc-pentapeptide onto the lipid carrier undecaprenyl phosphate, yielding undecaprenyl-pyrophosphoryl-MurNAc-pentapeptide, known as lipid I. The sequence is that of Phospho-N-acetylmuramoyl-pentapeptide-transferase from Chlamydia trachomatis serovar L2b (strain UCH-1/proctitis).